The primary structure comprises 185 residues: Ribosome-recycling factor (185 aa).

The protein belongs to the RRF family.

It is found in the cytoplasm. Functionally, responsible for the release of ribosomes from messenger RNA at the termination of protein biosynthesis. May increase the efficiency of translation by recycling ribosomes from one round of translation to another. The sequence is that of Ribosome-recycling factor from Lacticaseibacillus casei (strain BL23) (Lactobacillus casei).